Consider the following 286-residue polypeptide: Nucleotide-binding protein Tgr7_0722 (286 aa).

Residue 8–15 (GLSGSGKS) participates in ATP binding. 60–63 (DVRS) is a binding site for GTP.

Belongs to the RapZ-like family.

Its function is as follows. Displays ATPase and GTPase activities. The protein is Nucleotide-binding protein Tgr7_0722 of Thioalkalivibrio sulfidiphilus (strain HL-EbGR7).